Here is a 1071-residue protein sequence, read N- to C-terminus: Exportin-1 (1071 aa).

Residues 46 to 112 (AQEVLTHLKE…KKYVVGLIIK (67 aa)) enclose the Importin N-terminal domain. HEAT repeat units follow at residues 217-240 (QNAPLVHATLETLLRFLNWIPLGY), 241-277 (IFETKLISTLIYKFLNVPMFRNVSLKCLTEIAGVSVS), 354-472 (MLLV…YVDT), 515-553 (RFLVTVIKDLLGLCEQKRGKDNKAIIASNIMYIVGQYPR), 560-597 (KFLKTVVNKLFEFMHETHDGVQDMACDTFIKIAQKCRR), and 602-639 (VQVGEVMPFIDEILNNINTIICDLQPQQVHTFYEAVGY). The segment at 327 to 450 (CTFLKEHGQL…VREFMKDTDS (124 aa)) is necessary for interaction with Ran and nuclear export complex formation. Ser391 is modified (phosphoserine). The necessary for interaction with RANBP3 stretch occupies residues 411–481 (TVLSKVRLLM…TEIIMTKKLQ (71 aa)). At Lys446 the chain carries N6-acetyllysine. Thr448 bears the Phosphothreonine mark. At Ser450 the chain carries Phosphoserine. Residue Tyr454 is modified to Phosphotyrosine. Residue Lys693 is modified to N6-acetyllysine. HEAT repeat units lie at residues 775 to 813 (NFVPPLLDAVLIDYQRNVPAAREPEVLSTMAIIVNKLGG), 885 to 916 (TMRNVADTGLQILFTLLQNVAQEEAAAQSFYQ), and 917 to 954 (TYFCDILQHIFSVVTDTSHTAGLTMHASILAYMFNLVE). Phosphoserine occurs at positions 966 and 1031. The stretch at 1002–1039 (FSLNQDIPAFKEHLRDFLVQIKEFAGEDTSDLFLEERE) is one HEAT 10 repeat.

The protein belongs to the exportin family. In terms of assembly, found in a U snRNA export complex with PHAX/RNUXA, NCBP1/CBP80, NCBP2/CBP20, RAN, XPO1 and m7G-capped RNA. Component of a nuclear export receptor complex composed of KPNB1, RAN, SNUPN and XPO1. Found in a trimeric export complex with SNUPN, RAN and XPO1. Found in a nuclear export complex with RANBP3 and RAN. Found in a 60S ribosomal subunit export complex with NMD3, RAN, XPO1. Interacts with DDX3X, NMD3, NUP42, NUP88, NUP214, RANBP3 and TERT. Interacts with NEMF (via its N-terminus). Interacts with the monomeric form of BIRC5/survivin deacetylated at 'Lys-129'. Interacts with DTNBP1 and SERTAD2; the interactions translocate DTNBP1 and SERTAD2 out of the nucleus. Interacts with ATF2. Interacts with SLC35G1 and STIM1. Interacts with DCAF8. Interacts with CPEB3. Interacts with HAX1. Interacts with BOK; translocates to the cytoplasm. Interacts with HSP90AB1. Interacts with LRPPRC; interacts with LRPPRC alone and also when LRPPRC is in complex with EIF4E and with EIF4E sensitivity element (4ESE)-containing mRNAs to form an EIF4E-dependent mRNA export complex.

Its subcellular location is the cytoplasm. It is found in the nucleus. The protein localises to the nucleoplasm. The protein resides in the cajal body. It localises to the nucleolus. Its function is as follows. Mediates the nuclear export of cellular proteins (cargos) bearing a leucine-rich nuclear export signal (NES) and of RNAs. In the nucleus, in association with RANBP3, binds cooperatively to the NES on its target protein and to the GTPase Ran in its active GTP-bound form. Docking of this complex to the nuclear pore complex (NPC) is mediated through binding to nucleoporins. Upon transit of a nuclear export complex into the cytoplasm, disassembling of the complex and hydrolysis of Ran-GTP to Ran-GDP (induced by RANBP1 and RANGAP1, respectively) cause release of the cargo from the export receptor. The directionality of nuclear export is thought to be conferred by an asymmetric distribution of the GTP- and GDP-bound forms of Ran between the cytoplasm and nucleus. Involved in U3 snoRNA transport from Cajal bodies to nucleoli. Binds to late precursor U3 snoRNA bearing a TMG cap. In Rattus norvegicus (Rat), this protein is Exportin-1 (Xpo1).